A 229-amino-acid chain; its full sequence is UPF0228 protein MA_3119 (229 aa).

A compositionally biased stretch (low complexity) spans 35-66 (STPVNTSTPVNTSTPVNTSTPVNTSTPVSTST). The segment at 35–67 (STPVNTSTPVNTSTPVNTSTPVNTSTPVSTSTI) is disordered.

This sequence belongs to the UPF0228 family.

In Methanosarcina acetivorans (strain ATCC 35395 / DSM 2834 / JCM 12185 / C2A), this protein is UPF0228 protein MA_3119.